A 1526-amino-acid polypeptide reads, in one-letter code: Cell wall protein IFF4 (1526 aa).

The signal sequence occupies residues 1-20; that stretch reads MKFLQKFIITVALLTNIVFA. Asparagine 93 and asparagine 498 each carry an N-linked (GlcNAc...) asparagine glycan. The tract at residues 512 to 541 is disordered; the sequence is SSAGGSSFPEETHMLQTSDSDLSSTAGSES. The span at 525 to 541 shows a compositional bias: polar residues; the sequence is MLQTSDSDLSSTAGSES. N-linked (GlcNAc...) asparagine glycosylation occurs at asparagine 637. The tract at residues 1180–1207 is disordered; the sequence is WNGAKSDSPHTSESDITSQYNSHSTSVA. The span at 1193 to 1207 shows a compositional bias: polar residues; it reads SDITSQYNSHSTSVA. N-linked (GlcNAc...) asparagine glycans are attached at residues asparagine 1451, asparagine 1463, asparagine 1479, asparagine 1502, and asparagine 1506. The disordered stretch occupies residues 1455–1483; it reads SSVSGYPTNRSDSNGYANTPTTGSNTSGD. Asparagine 1502 carries the GPI-anchor amidated asparagine lipid modification. A propeptide spans 1503–1526 (removed in mature form); sequence GSTNISNKYLKFLGTVVSILILLI.

It belongs to the HYR1/IFF family. The GPI-anchor is attached to the protein in the endoplasmic reticulum and serves to target the protein to the cell surface. There, the glucosamine-inositol phospholipid moiety is cleaved off and the GPI-$modified mannoprotein is covalently attached via its lipidless GPI glycan remnant to the 1,6-beta-glucan of the outer cell wall layer.

The protein localises to the secreted. Its subcellular location is the cell wall. It is found in the membrane. Functionally, GPI-anchored cell wall protein involved in cell wall organization, hyphal growth, as well as in host-fungal interaction and virulence. Plays a role in adherence to plastic and to host epithelial cells. Promotes the tissue fungal burden during murine vaginal candidiasis. Also increases susceptibility to neutrophil-mediated killing. Furthermore, contributes to the severity of hematogenously disseminated candidiasis in normal mice, but not in neutropenic mice. This chain is Cell wall protein IFF4 (IFF4), found in Candida albicans (strain SC5314 / ATCC MYA-2876) (Yeast).